We begin with the raw amino-acid sequence, 333 residues long: GTP 3',8-cyclase (333 aa).

Residues 7–221 form the Radical SAM core domain; that stretch reads KFGRVHDYIR…FEACDAIGFE (215 aa). R16 lines the GTP pocket. Residues C23 and C27 each coordinate [4Fe-4S] cluster. Y29 serves as a coordination point for S-adenosyl-L-methionine. [4Fe-4S] cluster is bound at residue C30. R66 is a GTP binding site. An S-adenosyl-L-methionine-binding site is contributed by G70. T97 is a binding site for GTP. S121 provides a ligand contact to S-adenosyl-L-methionine. Position 158 (K158) interacts with GTP. Residue M192 coordinates S-adenosyl-L-methionine. Positions 257 and 260 each coordinate [4Fe-4S] cluster. Residue 262–264 coordinates GTP; the sequence is RLR. A [4Fe-4S] cluster-binding site is contributed by C274.

Belongs to the radical SAM superfamily. MoaA family. Monomer and homodimer. The cofactor is [4Fe-4S] cluster.

The enzyme catalyses GTP + AH2 + S-adenosyl-L-methionine = (8S)-3',8-cyclo-7,8-dihydroguanosine 5'-triphosphate + 5'-deoxyadenosine + L-methionine + A + H(+). Its pathway is cofactor biosynthesis; molybdopterin biosynthesis. Functionally, catalyzes the cyclization of GTP to (8S)-3',8-cyclo-7,8-dihydroguanosine 5'-triphosphate. The chain is GTP 3',8-cyclase from Listeria welshimeri serovar 6b (strain ATCC 35897 / DSM 20650 / CCUG 15529 / CIP 8149 / NCTC 11857 / SLCC 5334 / V8).